A 202-amino-acid chain; its full sequence is Orotate phosphoribosyltransferase (202 aa).

Residues Lys93 and 113–121 (EDIITTGGS) each bind 5-phospho-alpha-D-ribose 1-diphosphate. Orotate-binding residues include Thr117 and Arg145.

Belongs to the purine/pyrimidine phosphoribosyltransferase family. PyrE subfamily. Homodimer. Mg(2+) serves as cofactor.

The catalysed reaction is orotidine 5'-phosphate + diphosphate = orotate + 5-phospho-alpha-D-ribose 1-diphosphate. It functions in the pathway pyrimidine metabolism; UMP biosynthesis via de novo pathway; UMP from orotate: step 1/2. Catalyzes the transfer of a ribosyl phosphate group from 5-phosphoribose 1-diphosphate to orotate, leading to the formation of orotidine monophosphate (OMP). The protein is Orotate phosphoribosyltransferase of Campylobacter hominis (strain ATCC BAA-381 / DSM 21671 / CCUG 45161 / LMG 19568 / NCTC 13146 / CH001A).